A 598-amino-acid chain; its full sequence is Aspartate--tRNA(Asp/Asn) ligase (598 aa).

Glu174 is a binding site for L-aspartate. The aspartate stretch occupies residues 198–201; it reads QQLK. Arg220 contacts L-aspartate. Residues 220 to 222 and Gln229 contribute to the ATP site; that span reads RDE. His458 provides a ligand contact to L-aspartate. Residue Glu492 participates in ATP binding. Residue Arg499 coordinates L-aspartate. 544 to 547 is an ATP binding site; the sequence is GIDR.

Belongs to the class-II aminoacyl-tRNA synthetase family. Type 1 subfamily. As to quaternary structure, homodimer.

It is found in the cytoplasm. It carries out the reaction tRNA(Asx) + L-aspartate + ATP = L-aspartyl-tRNA(Asx) + AMP + diphosphate. Aspartyl-tRNA synthetase with relaxed tRNA specificity since it is able to aspartylate not only its cognate tRNA(Asp) but also tRNA(Asn). Reaction proceeds in two steps: L-aspartate is first activated by ATP to form Asp-AMP and then transferred to the acceptor end of tRNA(Asp/Asn). The chain is Aspartate--tRNA(Asp/Asn) ligase from Dehalococcoides mccartyi (strain ATCC BAA-2100 / JCM 16839 / KCTC 5957 / BAV1).